The chain runs to 213 residues: Protein GET1 (213 aa).

Over 1–4 (MPSL) the chain is Lumenal. A helical membrane pass occupies residues 5 to 24 (LLVVFILQFLLHIINTVGAS). The Cytoplasmic portion of the chain corresponds to 25–110 (TVNDLLWILY…AFTSAVSTLR (86 aa)). Residues 41-68 (TSSSAQKAQKLKKEIVQLKRELGATSAQ) are a coiled coil. The helical transmembrane segment at 111–131 (WLGTQGLRFVLQFWFAKSPMF) threads the bilayer. Residues 132–155 (WMPAGWLPFYVEWILSFPRAPLGS) lie on the Lumenal side of the membrane. The helical transmembrane segment at 156 to 172 (VSINVWGIACASMIALA) threads the bilayer. Topologically, residues 173-213 (AEGLAAVWVLATKRPTPIATEKKEAMAFAADQKSSGEKKEL) are cytoplasmic.

Belongs to the WRB/GET1 family. As to quaternary structure, interacts with GET3.

Its subcellular location is the endoplasmic reticulum membrane. Functionally, required for the post-translational delivery of tail-anchored (TA) proteins to the endoplasmic reticulum. Acts as a membrane receptor for soluble GET3, which recognizes and selectively binds the transmembrane domain of TA proteins in the cytosol. This is Protein GET1 from Phaeosphaeria nodorum (strain SN15 / ATCC MYA-4574 / FGSC 10173) (Glume blotch fungus).